A 315-amino-acid chain; its full sequence is Cobalamin biosynthesis protein CobD (315 aa).

The next 5 membrane-spanning stretches (helical) occupy residues 48-68 (IAGFFAWLFIVFITFGVTLGI), 77-97 (PILGTVVSGILIYFCISAKGL), 150-170 (DGIIAPLFFAGIGGAPLAFLY), 200-220 (VFNYIPARLTAYLIVISSFIL), and 295-315 (MVSFLGMVVALIIRCILEVII).

It belongs to the CobD/CbiB family.

It localises to the cell membrane. The protein operates within cofactor biosynthesis; adenosylcobalamin biosynthesis. Converts cobyric acid to cobinamide by the addition of aminopropanol on the F carboxylic group. This is Cobalamin biosynthesis protein CobD from Clostridium perfringens (strain 13 / Type A).